Here is a 334-residue protein sequence, read N- to C-terminus: Glyceraldehyde-3-phosphate dehydrogenase (334 aa).

NAD(+)-binding positions include 12-13 (TI) and G111. 140-142 (SCN) lines the D-glyceraldehyde 3-phosphate pocket. Residue C141 is the Nucleophile of the active site. R167 contacts NAD(+). D-glyceraldehyde 3-phosphate is bound at residue 192–193 (HG). Position 298 (Q298) interacts with NAD(+).

The protein belongs to the glyceraldehyde-3-phosphate dehydrogenase family. As to quaternary structure, homotetramer.

Its subcellular location is the cytoplasm. The catalysed reaction is D-glyceraldehyde 3-phosphate + phosphate + NADP(+) = (2R)-3-phospho-glyceroyl phosphate + NADPH + H(+). It catalyses the reaction D-glyceraldehyde 3-phosphate + phosphate + NAD(+) = (2R)-3-phospho-glyceroyl phosphate + NADH + H(+). The protein operates within carbohydrate degradation; glycolysis; pyruvate from D-glyceraldehyde 3-phosphate: step 1/5. This is Glyceraldehyde-3-phosphate dehydrogenase from Thermococcus sibiricus (strain DSM 12597 / MM 739).